A 69-amino-acid polypeptide reads, in one-letter code: DNA gyrase inhibitor YacG (69 aa).

Residues Cys7, Cys10, Cys26, and Cys30 each contribute to the Zn(2+) site.

It belongs to the DNA gyrase inhibitor YacG family. Interacts with GyrB. The cofactor is Zn(2+).

In terms of biological role, inhibits all the catalytic activities of DNA gyrase by preventing its interaction with DNA. Acts by binding directly to the C-terminal domain of GyrB, which probably disrupts DNA binding by the gyrase. This chain is DNA gyrase inhibitor YacG, found in Shewanella baltica (strain OS223).